A 289-amino-acid chain; its full sequence is Glucosamine-6-phosphate deaminase 1 (289 aa).

Lys-64 is subject to N6-acetyllysine. Residue Asp-72 is the Proton acceptor; for enolization step of the active site. Asp-141 functions as the For ring-opening step in the catalytic mechanism. Catalysis depends on His-143, which acts as the Proton acceptor; for ring-opening step. Glu-148 functions as the For ring-opening step in the catalytic mechanism. Thr-161 is modified (phosphothreonine).

The protein belongs to the glucosamine/galactosamine-6-phosphate isomerase family. Homohexamer.

The protein localises to the cytoplasm. The catalysed reaction is alpha-D-glucosamine 6-phosphate + H2O = beta-D-fructose 6-phosphate + NH4(+). It participates in nucleotide-sugar biosynthesis; UDP-N-acetyl-alpha-D-glucosamine biosynthesis; alpha-D-glucosamine 6-phosphate from D-fructose 6-phosphate: step 1/1. Allosterically activated by N-acetylglucosamine-6-phosphate (GlcNAc6P). Its function is as follows. Catalyzes the reversible conversion of alpha-D-glucosamine 6-phosphate (GlcN-6P) into beta-D-fructose 6-phosphate (Fru-6P) and ammonium ion, a regulatory reaction step in de novo uridine diphosphate-N-acetyl-alpha-D-glucosamine (UDP-GlcNAc) biosynthesis via hexosamine pathway. Deamination is coupled to aldo-keto isomerization mediating the metabolic flux from UDP-GlcNAc toward Fru-6P. At high ammonium level can drive amination and isomerization of Fru-6P toward hexosamines and UDP-GlcNAc synthesis. Has a role in fine tuning the metabolic fluctuations of cytosolic UDP-GlcNAc and their effects on hyaluronan synthesis that occur during tissue remodeling. Seems to trigger calcium oscillations in mammalian eggs. These oscillations serve as the essential trigger for egg activation and early development of the embryo. This Bos taurus (Bovine) protein is Glucosamine-6-phosphate deaminase 1.